A 646-amino-acid polypeptide reads, in one-letter code: Centrosomal protein of 72 kDa (646 aa).

LRR repeat units lie at residues 28–49 (ELRS…GNSL), 54–75 (ALKS…QYLV), and 76–97 (SLES…FRLH). In terms of domain architecture, LRRCT spans 110–149 (NPVVKNESDYRLFVVHMLPKLRQLDDRPVRESERKASQLH). A phosphoserine mark is found at serine 117 and serine 236. Disordered regions lie at residues 300–342 (SVDV…RFQV) and 357–399 (GPSS…SDPR). Positions 307 to 319 (ASSAQKSSLSSQK) are enriched in low complexity. A Phosphoserine modification is found at serine 380. Basic and acidic residues predominate over residues 383-392 (EALEAEERTS). The residue at position 402 (serine 402) is a Phosphoserine. Residues 476–622 (LSLENKTLQS…RAEVEQMRWS (147 aa)) adopt a coiled-coil conformation.

The protein belongs to the CEP72 family. Interacts with KIZ, PCM1 and CDK5RAP2.

The protein resides in the cytoplasm. Its subcellular location is the cytoskeleton. It localises to the microtubule organizing center. It is found in the centrosome. The protein localises to the centriolar satellite. Involved in the recruitment of key centrosomal proteins to the centrosome. Provides centrosomal microtubule-nucleation activity on the gamma-tubulin ring complexes (gamma-TuRCs) and has critical roles in forming a focused bipolar spindle, which is needed for proper tension generation between sister chromatids. Required for localization of KIZ, AKAP9 and gamma-tubulin ring complexes (gamma-TuRCs). Involved in centriole duplication. Required for CDK5RAP22, CEP152, WDR62 and CEP63 centrosomal localization and promotes the centrosomal localization of CDK2. This is Centrosomal protein of 72 kDa (Cep72) from Mus musculus (Mouse).